Consider the following 393-residue polypeptide: MGRLTSGVGTAALLVVAVGLRVVCAKYALADPSLKMADPNRFRGKNLPVLDQLTDPPGVKRVYHIQPSLEDPFQPPSIPITVYYAVLERACRSVLLHAPSEAPQIVRGASDEARKHTYNLTIAWYRMGDNCAIPITVMEYTECPYNKSLGVCPIRTQPRWSYYDSFSAVSEDNLGFLMHAPAFETAGTYLRLVKINDWTEITQFILEHRARASCKYALPLRIPPAACLTSKAYQQGVTVDSIGMLPRFIPENQRTVALYSLKIAGWHGPKPPYTSTLLPPELSDTTNATQPELVPEDPEDSALLEDPAGTVSSQIPPNWHIPSIQDVAPHHAPAAPSNPGLIIGALAGSTLAVLVIGGIAFWVRRRAQMAPKRLRLPHIRDDDAPPSHQPLFY.

A signal peptide spans 1–25 (MGRLTSGVGTAALLVVAVGLRVVCA). An interaction with TNFRSF14 region spans residues 25–57 (AKYALADPSLKMADPNRFRGKNLPVLDQLTDPP). Over 26–340 (KYALADPSLK…HAPAAPSNPG (315 aa)) the chain is Virion surface. His64 provides a ligand contact to Zn(2+). Cystine bridges form between Cys91-Cys214, Cys131-Cys227, and Cys143-Cys152. N-linked (GlcNAc...) asparagine; by host glycosylation is found at Asn119 and Asn146. Asp240 provides a ligand contact to Zn(2+). Residues 261 to 305 (LKIAGWHGPKPPYTSTLLPPELSDTTNATQPELVPEDPEDSALLE) form a profusion region. A compositionally biased stretch (polar residues) spans 274-290 (TSTLLPPELSDTTNATQ). The tract at residues 274–301 (TSTLLPPELSDTTNATQPELVPEDPEDS) is disordered. A glycan (N-linked (GlcNAc...) asparagine; by host) is linked at Asn287. The helical transmembrane segment at 341–361 (LIIGALAGSTLAVLVIGGIAF) threads the bilayer. Residues 362-393 (WVRRRAQMAPKRLRLPHIRDDDAPPSHQPLFY) are Intravirion-facing.

This sequence belongs to the herpesviridae glycoprotein D family. Homodimer. Interacts with host receptor TNFRSF14. Interacts with host receptor NECTIN1. Interacts with host receptor NECTIN2. Interacts (via profusion domain) with gB; this interaction occurs in the absence of gH/gL. Interacts (via profusion domain) with gH/gL heterodimer; this interaction occurs in the absence of gB. Associates with the gB-gH/gL-gD complex. Interacts (via C-terminus) with UL11 tegument protein.

The protein localises to the virion membrane. Functionally, envelope glycoprotein that binds to the host cell entry receptors NECTIN1 and TNFRSF14/HVEM, promoting the virus entry into host cells. May trigger fusion with host membrane, by recruiting the fusion machinery composed of gB and gH/gL. This is Envelope glycoprotein D (gD) from Human herpesvirus 2 (strain HG52) (HHV-2).